The primary structure comprises 212 residues: Thymidylate kinase (212 aa).

10–17 contacts ATP; sequence GPEGAGKT.

Belongs to the thymidylate kinase family.

The enzyme catalyses dTMP + ATP = dTDP + ADP. Phosphorylation of dTMP to form dTDP in both de novo and salvage pathways of dTTP synthesis. This chain is Thymidylate kinase, found in Bacillus velezensis (strain DSM 23117 / BGSC 10A6 / LMG 26770 / FZB42) (Bacillus amyloliquefaciens subsp. plantarum).